Consider the following 382-residue polypeptide: Membrane protein MLC1 (382 aa).

The span at 1-28 (MTREGQFREELGYDRMPTLERGRQDAGR) shows a compositional bias: basic and acidic residues. Residues 1–43 (MTREGQFREELGYDRMPTLERGRQDAGRQDPGSYTPDSKPKDL) are disordered. The next 4 membrane-spanning stretches (helical) occupy residues 58 to 78 (WVFS…SLYL), 88 to 107 (YLRC…FAVG), 117 to 137 (FQIL…WFGC), and 148 to 168 (INFN…TVII). 3 positions are modified to phosphoserine: serine 183, serine 185, and serine 188. The next 4 helical transmembrane spans lie at 205–225 (SVVE…ALNV), 234–254 (LSVT…ASHV), 263–283 (LVEV…TASG), and 309–329 (LLLL…GTAI).

In terms of assembly, interacts with ATP1B1. Part of a complex containing ATP1B1, TRPV4, AQP4 and HEPACAM.

It localises to the membrane. Its subcellular location is the cell membrane. The protein localises to the cytoplasm. The protein resides in the perinuclear region. It is found in the endoplasmic reticulum. Functionally, transmembrane protein mainly expressed in brain astrocytes that may play a role in transport across the blood-brain and brain-cerebrospinal fluid barriers. Regulates the response of astrocytes to hypo-osmosis by promoting calcium influx. May function as regulatory protein of membrane protein complexes such as ion channels. The sequence is that of Membrane protein MLC1 from Mus musculus (Mouse).